Consider the following 89-residue polypeptide: Small ribosomal subunit protein uS19 (89 aa).

It belongs to the universal ribosomal protein uS19 family.

Functionally, protein S19 forms a complex with S13 that binds strongly to the 16S ribosomal RNA. The polypeptide is Small ribosomal subunit protein uS19 (Vesicomyosocius okutanii subsp. Calyptogena okutanii (strain HA)).